The sequence spans 191 residues: Calcium-activated potassium channel subunit beta-1 (191 aa).

Residues 1–15 (MGKKLVMAQKRGETR) lie on the Cytoplasmic side of the membrane. A helical transmembrane segment spans residues 16–36 (ALCLGVAMVMCAVIAYYILGT). The Extracellular portion of the chain corresponds to 37 to 157 (TMLPLYQKSV…YRRLYGPQTL (121 aa)). N-linked (GlcNAc...) asparagine glycosylation is found at Asn80 and Asn142. The helical transmembrane segment at 158 to 178 (LFSLFWPTFLLTGGLLIIAMV) threads the bilayer. The Cytoplasmic portion of the chain corresponds to 179–191 (KINQSLSILAAQR).

It belongs to the KCNMB (TC 8.A.14.1) family. KCNMB1 subfamily. Interacts with KCNMA1 tetramer. There are probably 4 molecules of KCMNB1 per KCNMA1 tetramer. In terms of processing, N-glycosylated.

The protein resides in the membrane. Its function is as follows. Regulatory subunit of the calcium activated potassium KCNMA1 (maxiK) channel. Modulates the calcium sensitivity and gating kinetics of KCNMA1, thereby contributing to KCNMA1 channel diversity. Increases the apparent Ca(2+)/voltage sensitivity of the KCNMA1 channel. It also modifies KCNMA1 channel kinetics and alters its pharmacological properties. It slows down the activation and the deactivation kinetics of the channel. Acts as a negative regulator of smooth muscle contraction by enhancing the calcium sensitivity to KCNMA1. Its presence is also a requirement for internal binding of the KCNMA1 channel opener dehydrosoyasaponin I (DHS-1) triterpene glycoside and for external binding of the agonist hormone 17-beta-estradiol (E2). Increases the binding activity of charybdotoxin (CTX) toxin to KCNMA1 peptide blocker by increasing the CTX association rate and decreasing the dissociation rate. This chain is Calcium-activated potassium channel subunit beta-1 (KCNMB1), found in Canis lupus familiaris (Dog).